A 356-amino-acid polypeptide reads, in one-letter code: UDP-N-acetylglucosamine--N-acetylmuramyl-(pentapeptide) pyrophosphoryl-undecaprenol N-acetylglucosamine transferase (356 aa).

UDP-N-acetyl-alpha-D-glucosamine contacts are provided by residues 15–17 (TGG), asparagine 127, arginine 163, serine 191, isoleucine 244, 263–268 (ALTVSE), and glutamine 288.

It belongs to the glycosyltransferase 28 family. MurG subfamily.

The protein localises to the cell inner membrane. It carries out the reaction di-trans,octa-cis-undecaprenyl diphospho-N-acetyl-alpha-D-muramoyl-L-alanyl-D-glutamyl-meso-2,6-diaminopimeloyl-D-alanyl-D-alanine + UDP-N-acetyl-alpha-D-glucosamine = di-trans,octa-cis-undecaprenyl diphospho-[N-acetyl-alpha-D-glucosaminyl-(1-&gt;4)]-N-acetyl-alpha-D-muramoyl-L-alanyl-D-glutamyl-meso-2,6-diaminopimeloyl-D-alanyl-D-alanine + UDP + H(+). The protein operates within cell wall biogenesis; peptidoglycan biosynthesis. Functionally, cell wall formation. Catalyzes the transfer of a GlcNAc subunit on undecaprenyl-pyrophosphoryl-MurNAc-pentapeptide (lipid intermediate I) to form undecaprenyl-pyrophosphoryl-MurNAc-(pentapeptide)GlcNAc (lipid intermediate II). This Yersinia pestis (strain Pestoides F) protein is UDP-N-acetylglucosamine--N-acetylmuramyl-(pentapeptide) pyrophosphoryl-undecaprenol N-acetylglucosamine transferase.